The following is a 596-amino-acid chain: Succinate dehydrogenase flavoprotein subunit (596 aa).

Residues 18-23, 41-56, and aspartate 225 contribute to the FAD site; these read GAGGAG and TKLF…AQGG. At histidine 49 the chain carries Tele-8alpha-FAD histidine. Residues histidine 246 and threonine 258 each contribute to the substrate site. The active-site Proton acceptor is arginine 290. Histidine 357 contacts substrate. FAD is bound at residue glutamate 391. Arginine 402 is a substrate binding site. An FAD-binding site is contributed by 407–408; it reads SL.

This sequence belongs to the FAD-dependent oxidoreductase 2 family. FRD/SDH subfamily. Part of an enzyme complex containing four subunits: a flavoprotein, an iron-sulfur, cytochrome b-556, and a hydrophobic anchor protein. FAD is required as a cofactor.

The protein localises to the cell inner membrane. The enzyme catalyses a quinone + succinate = fumarate + a quinol. It participates in carbohydrate metabolism; tricarboxylic acid cycle; fumarate from succinate (bacterial route): step 1/1. The protein is Succinate dehydrogenase flavoprotein subunit (sdhA) of Rickettsia felis (strain ATCC VR-1525 / URRWXCal2) (Rickettsia azadi).